Consider the following 586-residue polypeptide: Capsid scaffolding protein (586 aa).

Residues histidine 53, serine 123, and histidine 142 each act as charge relay system in the active site. Residues 251 to 263 (SEETPENAIKDRS) show a composition bias toward basic and acidic residues. 4 disordered regions span residues 251-288 (SEET…HVPA), 330-364 (ARRD…DIWP), 458-486 (NKRD…YFPG), and 530-586 (SASN…MMAD). Residues 264 to 284 (VSTQTAPSFDISESQQPSGQT) show a composition bias toward polar residues. The interaction with pAP stretch occupies residues 312–331 (EDMVYVPFEKYASLLAASAR). Interaction with major capsid protein regions lie at residues 566 to 586 (DAQT…MMAD) and 567 to 586 (AQTK…MMAD).

This sequence belongs to the herpesviridae capsid scaffolding protein family. Homomultimer. Interacts with major capsid protein. As to quaternary structure, exists in a monomer-dimer equilibrium with the dimer being the active species. Post-translationally, capsid scaffolding protein is cleaved by assemblin after formation of the spherical procapsid. As a result, the capsid obtains its mature, icosahedral shape. Cleavages occur at two or more sites: release (R-site) and maturation (M-site).

It is found in the host cytoplasm. The protein localises to the host nucleus. It carries out the reaction Cleaves -Ala-|-Ser- and -Ala-|-Ala- bonds in the scaffold protein.. Functionally, acts as a scaffold protein by binding major capsid protein in the cytoplasm, inducing the nuclear localization of both proteins. Multimerizes in the nucleus such as major capsid protein forms the icosahedral T=16 capsid. Autocatalytic cleavage releases the assembly protein, and subsequently abolishes interaction with major capsid protein. Cleavages products are evicted from the capsid before or during DNA packaging. Its function is as follows. Protease that plays an essential role in virion assembly within the nucleus. Catalyzes the cleavage of the assembly protein after formation of the spherical procapsid. By that cleavage, the capsid matures and gains its icosahedral shape. The cleavage sites seem to include -Ala-Ser-, -Ala-Ala-, as well as Ala-Thr bonds. Assemblin and cleavages products are evicted from the capsid before or during DNA packaging. Plays a major role in capsid assembly. Acts as a scaffold protein by binding major capsid protein. Multimerizes in the nucleus such as major capsid protein forms the icosahedral T=16 capsid. Cleaved by assemblin after capsid completion. The cleavages products are evicted from the capsid before or during DNA packaging. The polypeptide is Capsid scaffolding protein (Gallus gallus (Chicken)).